The chain runs to 743 residues: tRNA(Met) cytidine acetyltransferase TmcA (743 aa).

ATP contacts are provided by residues Gln-216, 241 to 250, and Arg-390; that span reads GRGKSASIGL. In terms of domain architecture, N-acetyltransferase spans 420-604; the sequence is LKIEDVSQEE…YSVIVIRALS (185 aa). Residues 531 to 533 and 538 to 544 contribute to the acetyl-CoA site; these read IAV and QGKGIGS.

Belongs to the RNA cytidine acetyltransferase family. TmcA subfamily.

Its subcellular location is the cytoplasm. The catalysed reaction is cytidine(34) in elongator tRNA(Met) + acetyl-CoA + ATP + H2O = N(4)-acetylcytidine(34) in elongator tRNA(Met) + ADP + phosphate + CoA + H(+). Catalyzes the formation of N(4)-acetylcytidine (ac(4)C) at the wobble position of tRNA(Met), by using acetyl-CoA as an acetyl donor and ATP (or GTP). In Saccharolobus islandicus (strain Y.G.57.14 / Yellowstone #1) (Sulfolobus islandicus), this protein is tRNA(Met) cytidine acetyltransferase TmcA.